We begin with the raw amino-acid sequence, 486 residues long: Aspartyl/glutamyl-tRNA(Asn/Gln) amidotransferase subunit B (486 aa).

The protein belongs to the GatB/GatE family. GatB subfamily. Heterotrimer of A, B and C subunits.

The enzyme catalyses L-glutamyl-tRNA(Gln) + L-glutamine + ATP + H2O = L-glutaminyl-tRNA(Gln) + L-glutamate + ADP + phosphate + H(+). It carries out the reaction L-aspartyl-tRNA(Asn) + L-glutamine + ATP + H2O = L-asparaginyl-tRNA(Asn) + L-glutamate + ADP + phosphate + 2 H(+). Functionally, allows the formation of correctly charged Asn-tRNA(Asn) or Gln-tRNA(Gln) through the transamidation of misacylated Asp-tRNA(Asn) or Glu-tRNA(Gln) in organisms which lack either or both of asparaginyl-tRNA or glutaminyl-tRNA synthetases. The reaction takes place in the presence of glutamine and ATP through an activated phospho-Asp-tRNA(Asn) or phospho-Glu-tRNA(Gln). The polypeptide is Aspartyl/glutamyl-tRNA(Asn/Gln) amidotransferase subunit B (Leptospira interrogans serogroup Icterohaemorrhagiae serovar Lai (strain 56601)).